Here is a 431-residue protein sequence, read N- to C-terminus: MGKNVVVLGTQWGDEGKGKIVDLLTEKVSQVARFQGGHNAGHTLVIEGKKTVLHLIPSGILHDGVTCMIGNGVVLSPEALIKEIEELEANGVEVRSKLKLSPACPLILPYHVALDLARESKRGDAKIGTTGRGIGPAYEDKVSRRGLRLGDLLNEQRFAAKLAEVLEYHNFALTQYYGAEPVDYQEVLNKALELGAQLRPMIADVVDMLHTSRENGEHILFEGAQGSLLDIDHGTYPFVTSSNTTAGGTATGSGFGPLYLDYVLGITKAYTTRVGSGPFPTELECDVGKHLGEKGHEFGATTGRQRRTGWFDAVAVRHAVRINSMTGMCLTKLDVLDGLSEVKICVGYKDSNGAVIGIPCDAEGWADVQPVYESMPGWTASTVGAKTMEELPVEAVNYIRRLEELVGIPADIISTGPDRVETIVLRHPFEG.

GTP-binding positions include 13–19 (GDEGKGK) and 41–43 (GHT). The Proton acceptor role is filled by D14. 2 residues coordinate Mg(2+): D14 and G41. IMP contacts are provided by residues 14–17 (DEGK), 39–42 (NAGH), T130, R144, Q225, T240, and R304. H42 (proton donor) is an active-site residue. 300–306 (ATTGRQR) is a binding site for substrate. GTP-binding positions include R306, 332–334 (KLD), and 414–416 (STG).

Belongs to the adenylosuccinate synthetase family. As to quaternary structure, homodimer. Mg(2+) serves as cofactor.

The protein resides in the cytoplasm. The enzyme catalyses IMP + L-aspartate + GTP = N(6)-(1,2-dicarboxyethyl)-AMP + GDP + phosphate + 2 H(+). It participates in purine metabolism; AMP biosynthesis via de novo pathway; AMP from IMP: step 1/2. Functionally, plays an important role in the de novo pathway of purine nucleotide biosynthesis. Catalyzes the first committed step in the biosynthesis of AMP from IMP. The sequence is that of Adenylosuccinate synthetase from Saccharophagus degradans (strain 2-40 / ATCC 43961 / DSM 17024).